Reading from the N-terminus, the 291-residue chain is Pantothenate synthetase (291 aa).

Residue methionine 30–histidine 37 coordinates ATP. The active-site Proton donor is the histidine 37. Position 61 (glutamine 61) interacts with (R)-pantoate. A beta-alanine-binding site is contributed by glutamine 61. Glycine 147–aspartate 150 is an ATP binding site. Residue glutamine 153 participates in (R)-pantoate binding. ATP is bound by residues valine 176 and cysteine 184–arginine 187.

The protein belongs to the pantothenate synthetase family. In terms of assembly, homodimer.

Its subcellular location is the cytoplasm. The enzyme catalyses (R)-pantoate + beta-alanine + ATP = (R)-pantothenate + AMP + diphosphate + H(+). The protein operates within cofactor biosynthesis; (R)-pantothenate biosynthesis; (R)-pantothenate from (R)-pantoate and beta-alanine: step 1/1. Functionally, catalyzes the condensation of pantoate with beta-alanine in an ATP-dependent reaction via a pantoyl-adenylate intermediate. This Sinorhizobium medicae (strain WSM419) (Ensifer medicae) protein is Pantothenate synthetase.